Reading from the N-terminus, the 513-residue chain is Bifunctional purine biosynthesis protein PurH (513 aa).

The region spanning 1-145 is the MGS-like domain; sequence MTKKAIISVY…KNFKYITVII (145 aa).

This sequence belongs to the PurH family.

It carries out the reaction (6R)-10-formyltetrahydrofolate + 5-amino-1-(5-phospho-beta-D-ribosyl)imidazole-4-carboxamide = 5-formamido-1-(5-phospho-D-ribosyl)imidazole-4-carboxamide + (6S)-5,6,7,8-tetrahydrofolate. It catalyses the reaction IMP + H2O = 5-formamido-1-(5-phospho-D-ribosyl)imidazole-4-carboxamide. It functions in the pathway purine metabolism; IMP biosynthesis via de novo pathway; 5-formamido-1-(5-phospho-D-ribosyl)imidazole-4-carboxamide from 5-amino-1-(5-phospho-D-ribosyl)imidazole-4-carboxamide (10-formyl THF route): step 1/1. Its pathway is purine metabolism; IMP biosynthesis via de novo pathway; IMP from 5-formamido-1-(5-phospho-D-ribosyl)imidazole-4-carboxamide: step 1/1. The chain is Bifunctional purine biosynthesis protein PurH from Caldicellulosiruptor saccharolyticus (strain ATCC 43494 / DSM 8903 / Tp8T 6331).